Consider the following 428-residue polypeptide: D-amino acid dehydrogenase (428 aa).

3–17 (VVILGSGVVGVASAY) lines the FAD pocket.

This sequence belongs to the DadA oxidoreductase family. It depends on FAD as a cofactor.

It carries out the reaction a D-alpha-amino acid + A + H2O = a 2-oxocarboxylate + AH2 + NH4(+). It functions in the pathway amino-acid degradation; D-alanine degradation; NH(3) and pyruvate from D-alanine: step 1/1. In terms of biological role, oxidative deamination of D-amino acids. In Burkholderia mallei (strain NCTC 10247), this protein is D-amino acid dehydrogenase.